Here is a 495-residue protein sequence, read N- to C-terminus: Omega-crystallin (495 aa).

The protein belongs to the aldehyde dehydrogenase family. In terms of tissue distribution, lens.

Omega-crystallins are structural components of squids and octopi eye lens. Contains relatively little if any DHAL activity. The sequence is that of Omega-crystallin from Nototodarus sloanii (Wellington flying squid).